The primary structure comprises 876 residues: ATP-dependent helicase Lhr-Core (876 aa).

Positions 37, 60, 61, 175, 176, 374, and 377 each coordinate ATP. Residues 41-232 (IPLIKKGKNV…FLVGGNGDYE (192 aa)) form the Helicase ATP-binding domain. The DEAH box motif lies at 175–178 (DEIH). The Helicase C-terminal domain maps to 249–421 (PVKDLVHATE…NIHVPENPLD (173 aa)). Residues 422–506 (VLTQLIVAAS…IFFLNSGTIP (85 aa)) are WH domain. The segment at 507–876 (DEAMIPVKME…DLEYTEAGIK (370 aa)) is domain 4.

Belongs to the Lhr helicase family. Lhr-Core subfamily. In terms of assembly, monomer.

The enzyme catalyses Couples ATP hydrolysis with the unwinding of duplex DNA by translocating in the 3'-5' direction.. It carries out the reaction ATP + H2O = ADP + phosphate + H(+). Probably part of a 4-gene DNA damage response locus in which the upstream ups system, in combination with this downstream locus, functions in homologous recombination to rescue Sulfolobales from DNA-damaging threats. DNA helicase that translocates in a 3'-5' direction on single-stranded (ss)DNA. Binds Holliday junction (HJ) DNA, Y-shaped DNA, DNA with a 3'-overhang and single-stranded (ss)DNA with high affinity; binds double-stranded (ds)DNA with less affinity. Has helicase activity on DNA with a 3'-overhang, Y-shaped DNA and HJ DNA. Does not unwind blunt-ended dsDNA or DNA with a 5'-overhang. The sequence is that of ATP-dependent helicase Lhr-Core from Sulfolobus acidocaldarius (strain ATCC 33909 / DSM 639 / JCM 8929 / NBRC 15157 / NCIMB 11770).